The primary structure comprises 430 residues: Adenylosuccinate synthetase (430 aa).

GTP contacts are provided by residues 12–18 (GDEGKGK) and 40–42 (GHT). Catalysis depends on aspartate 13, which acts as the Proton acceptor. Positions 13 and 40 each coordinate Mg(2+). IMP is bound by residues 13 to 16 (DEGK), 38 to 41 (NAGH), threonine 130, arginine 144, glutamine 224, threonine 239, and arginine 303. Histidine 41 acts as the Proton donor in catalysis. Substrate is bound at residue 299-305 (VNTGRKR). GTP-binding positions include arginine 305, 331–333 (KLD), and 413–415 (STS).

It belongs to the adenylosuccinate synthetase family. Homodimer. Requires Mg(2+) as cofactor.

It localises to the cytoplasm. The enzyme catalyses IMP + L-aspartate + GTP = N(6)-(1,2-dicarboxyethyl)-AMP + GDP + phosphate + 2 H(+). The protein operates within purine metabolism; AMP biosynthesis via de novo pathway; AMP from IMP: step 1/2. Plays an important role in the de novo pathway of purine nucleotide biosynthesis. Catalyzes the first committed step in the biosynthesis of AMP from IMP. This chain is Adenylosuccinate synthetase, found in Nitrobacter hamburgensis (strain DSM 10229 / NCIMB 13809 / X14).